The chain runs to 320 residues: Heptaprenyl diphosphate synthase component 2 (320 aa).

The isopentenyl diphosphate site is built by K45, R48, and H77. Positions 84 and 88 each coordinate Mg(2+). R93 contributes to the all-trans-hexaprenyl diphosphate binding site. Position 94 (R94) interacts with isopentenyl diphosphate. All-trans-hexaprenyl diphosphate-binding residues include K170, T171, and Q208.

Belongs to the FPP/GGPP synthase family. In terms of assembly, heterodimer of component I and II. Mg(2+) serves as cofactor.

It catalyses the reaction 4 isopentenyl diphosphate + (2E,6E)-farnesyl diphosphate = all-trans-heptaprenyl diphosphate + 4 diphosphate. Its function is as follows. Supplies heptaprenyl diphosphate, the precursor for the side chain of the isoprenoid quinone menaquinone-7 (MQ-7). The sequence is that of Heptaprenyl diphosphate synthase component 2 (hepT) from Geobacillus stearothermophilus (Bacillus stearothermophilus).